Reading from the N-terminus, the 39-residue chain is Large ribosomal subunit protein bL36 (39 aa).

The protein belongs to the bacterial ribosomal protein bL36 family.

This Leuconostoc mesenteroides subsp. mesenteroides (strain ATCC 8293 / DSM 20343 / BCRC 11652 / CCM 1803 / JCM 6124 / NCDO 523 / NBRC 100496 / NCIMB 8023 / NCTC 12954 / NRRL B-1118 / 37Y) protein is Large ribosomal subunit protein bL36.